The sequence spans 921 residues: Sodium/calcium exchanger 2 (921 aa).

A signal peptide spans 1–20 (MAPLALVGVTLLLAAPPCSG). The Extracellular segment spans residues 21–68 (AATPTPSLPPPPANDSDTSTGGCQGSYRCQPGVLLPVWEPDDPSLGDK). The disordered stretch occupies residues 22–42 (ATPTPSLPPPPANDSDTSTGG). Residue Asn34 is glycosylated (N-linked (GlcNAc...) asparagine). The helical transmembrane segment at 69 to 90 (AARAVVYFVAMVYMFLGVSIIA) threads the bilayer. Over 91–130 (DRFMAAIEVITSKEKEITITKANGETSVGTVRIWNETVSN) the chain is Cytoplasmic. The chain crosses the membrane as a helical span at residues 131–152 (LTLMALGSSAPEILLSVIEVCG). Residues 135-175 (ALGSSAPEILLSVIEVCGHNFQAGELGPGTIVGSAAFNMFV) form an Alpha-1 repeat. Residues 153–164 (HNFQAGELGPGT) are Extracellular-facing. Residues 165–185 (IVGSAAFNMFVVIAVCIYVIP) form a helical membrane-spanning segment. At 186 to 196 (AGESRKIKHLR) the chain is on the cytoplasmic side. A helical transmembrane segment spans residues 197–219 (VFFVTASWSIFAYVWLYLILAVF). At 220-222 (SPG) the chain is on the extracellular side. The chain crosses the membrane as a helical span at residues 223 to 246 (VVQVWEALLTLVFFPVCVVFAWMA). At 247–720 (DKRLLFYKYV…DGSREERLPS (474 aa)) the chain is on the cytoplasmic side. The interval 248-267 (KRLLFYKYVYKRYRTDPRSG) is putative calmodulin-binding region. Calx-beta domains are found at residues 384–483 (GAGE…VRLL) and 512–612 (ATVT…IELG). Residues Glu407, Asp443, Asp468, Asp469, Ile471, Glu473, Glu476, Asp518, Asp519, Asp520, Glu536, Asp598, Glu599, and Glu600 each contribute to the Ca(2+) site. Ser622 carries the phosphoserine modification. Ca(2+) is bound at residue Glu665. The chain crosses the membrane as a helical span at residues 721-740 (CFDYVMHFLTVFWKVLFACV). Residues 741–747 (PPTEYCH) are Extracellular-facing. Residues 748–770 (GWACFGVSILVIGLLTALIGDLA) traverse the membrane as a helical segment. At 771–772 (SH) the chain is on the cytoplasmic side. The helical transmembrane segment at 773–791 (FGCTVGLKDSVNAVVFVAL) threads the bilayer. The Alpha-2 repeat unit spans residues 790-826 (ALGTSIPDTFASKVAALQDQCADASIGNVTGSNAVNV). Topologically, residues 792–822 (GTSIPDTFASKVAALQDQCADASIGNVTGSN) are extracellular. Asn817 carries N-linked (GlcNAc...) asparagine glycosylation. A helical membrane pass occupies residues 823–843 (AVNVFLGLGVAWSVAAVYWAV). Topologically, residues 844 to 854 (QGRPFEVRTGT) are cytoplasmic. A helical transmembrane segment spans residues 855–875 (LAFSVTLFTVFAFVGIAVLLY). Residues 876–892 (RRRPHIGGELGGPRGPK) are Extracellular-facing. A helical transmembrane segment spans residues 893–909 (LATTALFLGLWLLYILF). The Cytoplasmic segment spans residues 910-921 (ASLEAYCHIRGF).

It belongs to the Ca(2+):cation antiporter (CaCA) (TC 2.A.19) family. SLC8 subfamily.

Its subcellular location is the cell membrane. It localises to the basolateral cell membrane. The protein resides in the perikaryon. It is found in the cell projection. The protein localises to the dendrite. Its subcellular location is the dendritic spine. The enzyme catalyses Ca(2+)(in) + 3 Na(+)(out) = Ca(2+)(out) + 3 Na(+)(in). Its activity is regulated as follows. Calcium transport is down-regulated by Na(+) and stimulated by Ca(2+). Mediates the electrogenic exchange of Ca(2+) against Na(+) ions across the cell membrane, and thereby contributes to the regulation of cytoplasmic Ca(2+) levels and Ca(2+)-dependent cellular processes. Contributes to cellular Ca(2+) homeostasis in excitable cells. Contributes to the rapid decrease of cytoplasmic Ca(2+) levels back to baseline after neuronal activation, and thereby contributes to modulate synaptic plasticity, learning and memory. Plays a role in regulating urinary Ca(2+) and Na(+) excretion. This Homo sapiens (Human) protein is Sodium/calcium exchanger 2 (SLC8A2).